The chain runs to 413 residues: Multifunctional CCA protein (413 aa).

Gly-8 and Arg-11 together coordinate ATP. CTP contacts are provided by Gly-8 and Arg-11. The Mg(2+) site is built by Glu-21 and Asp-23. Residues Arg-91, Arg-137, and Arg-140 each coordinate ATP. CTP is bound by residues Arg-91, Arg-137, and Arg-140. In terms of domain architecture, HD spans 228-329; the sequence is CGIHTLMSLR…WRLLQRLDVL (102 aa).

It belongs to the tRNA nucleotidyltransferase/poly(A) polymerase family. Bacterial CCA-adding enzyme type 1 subfamily. In terms of assembly, monomer. Can also form homodimers and oligomers. Requires Mg(2+) as cofactor. Ni(2+) is required as a cofactor.

It carries out the reaction a tRNA precursor + 2 CTP + ATP = a tRNA with a 3' CCA end + 3 diphosphate. The enzyme catalyses a tRNA with a 3' CCA end + 2 CTP + ATP = a tRNA with a 3' CCACCA end + 3 diphosphate. Its function is as follows. Catalyzes the addition and repair of the essential 3'-terminal CCA sequence in tRNAs without using a nucleic acid template. Adds these three nucleotides in the order of C, C, and A to the tRNA nucleotide-73, using CTP and ATP as substrates and producing inorganic pyrophosphate. tRNA 3'-terminal CCA addition is required both for tRNA processing and repair. Also involved in tRNA surveillance by mediating tandem CCA addition to generate a CCACCA at the 3' terminus of unstable tRNAs. While stable tRNAs receive only 3'-terminal CCA, unstable tRNAs are marked with CCACCA and rapidly degraded. In Acinetobacter baylyi (strain ATCC 33305 / BD413 / ADP1), this protein is Multifunctional CCA protein.